Consider the following 600-residue polypeptide: Na(+)/dicarboxylate cotransporter 3 (600 aa).

The Cytoplasmic portion of the chain corresponds to 1-16 (MAALAALAKKVWSARR). A helical transmembrane segment spans residues 17–37 (LLVLLLVPLALLPILFALPPK). The Extracellular portion of the chain corresponds to 38 to 55 (EGRCLYVILLMAVYWCTE). Residues 56 to 76 (ALPLSVTALLPIILFPFMGIL) traverse the membrane as a helical segment. Residues 77 to 82 (PSSKVC) are Cytoplasmic-facing. A helical membrane pass occupies residues 83–103 (PQYFLDTNFLFLSGLIMASAI). Residues 104-137 (EEWNLHRRIALKVLMLVGVQPARLILGMMVTTSF) are Extracellular-facing. Residues 138-158 (LSMWLSNTASTAMMLPIASAI) form a helical membrane-spanning segment. Over 159-229 (LKSLFGQREA…KEEEHRRNIW (71 aa)) the chain is Cytoplasmic. A helical transmembrane segment spans residues 230–250 (KGFLISIPYSASIGGTATLTG). Residues 251–278 (TAPNLILLGQLKSFFPQCDVVNFGSWFI) lie on the Extracellular side of the membrane. Residues 279–299 (FAFPLMLLFLLVGWLWISFLY) form a helical membrane-spanning segment. Residues 300–336 (GGMSWRSWRKKKSKIRADAEDQAKAVIQEEFQNLGPI) lie on the Cytoplasmic side of the membrane. The helical transmembrane segment at 337–357 (KFAEQAVFILFCTFAILLFSR) threads the bilayer. At 358 to 372 (DPKFIPGWASLFAPG) the chain is on the extracellular side. A helical membrane pass occupies residues 373 to 393 (FVSDAVTGVAIVTILFFFPSQ). Residues 394–422 (KPSLKWWFDFKAPNSETEPLLSWKKAQET) are Cytoplasmic-facing. Residues 423 to 443 (VPWNIILLLGGGFAMAKGCEE) constitute an intramembrane region (helical). Residues 444–461 (SGLSAWIGGQLHPLEHVP) lie on the Cytoplasmic side of the membrane. A helical transmembrane segment spans residues 462-482 (PLLAVLLITVVIAFFTEFASN). At 483–505 (TATIIIFLPVLAELAIRLHVHPL) the chain is on the extracellular side. A helical transmembrane segment spans residues 506–526 (YLMIPGTVGCSYAFMLPVSTP). Residues 527 to 546 (PNSIAFSTGHLLVKDMVRTG) lie on the Cytoplasmic side of the membrane. A helical membrane pass occupies residues 547–567 (LLMNLMGVLLLSLAMNTWAQT). Residues 568-600 (IFQLGTFPDWANTHAANATALPPALTNNTVQTF) are Extracellular-facing. Residues Asn-584 and Asn-594 are each glycosylated (N-linked (GlcNAc...) asparagine).

This sequence belongs to the SLC13A/DASS transporter (TC 2.A.47) family. NADC subfamily. Highly expressed in kidney, and at much lower levels in brain.

The protein localises to the cell membrane. It carries out the reaction succinate(out) + 3 Na(+)(out) = succinate(in) + 3 Na(+)(in). The enzyme catalyses 2-oxoglutarate(out) + 3 Na(+)(out) = 2-oxoglutarate(in) + 3 Na(+)(in). The catalysed reaction is N-acetyl-L-aspartate(out) + 3 Na(+)(out) = N-acetyl-L-aspartate(in) + 3 Na(+)(in). It catalyses the reaction fumarate(out) + 3 Na(+)(out) = fumarate(in) + 3 Na(+)(in). It carries out the reaction glutarate(out) + 3 Na(+)(out) = glutarate(in) + 3 Na(+)(in). The enzyme catalyses 2,2-dimethylsuccinate(out) + 3 Na(+)(out) = 2,2-dimethylsuccinate(in) + 3 Na(+)(in). The catalysed reaction is 2,3-dimethylsuccinate(out) + 3 Na(+)(out) = 2,3-dimethylsuccinate(in) + 3 Na(+)(in). It catalyses the reaction malate(out) + 3 Na(+)(out) = malate(in) + 3 Na(+)(in). It carries out the reaction itaconate(out) + 3 Na(+)(out) = itaconate(in) + 3 Na(+)(in). Functionally, high-affinity sodium-dicarboxylate cotransporter that accepts a range of substrates with 4-6 carbon atoms, such as the citric acid cycle intermediates succinate and alpha-ketoglutarate (2-oxoglutarate), as well as other compounds including N-acetyl-L-aspartate. Transports the dicarboxylate into the cell with a probable stoichiometry of 3 Na(+) for 1 divalent dicarboxylate, rendering the process electrogenic. Can transport citrate in a Na(+)-dependent manner, recognizing the divalent form of citrate rather than the trivalent form which is normally found in blood. Imports itaconate in hepatocytes leading to activation of TFEB-dependent lysosomal biogenesis involved in antibacterial innate immune response. The polypeptide is Na(+)/dicarboxylate cotransporter 3 (Slc13a3) (Mus musculus (Mouse)).